We begin with the raw amino-acid sequence, 260 residues long: NH(3)-dependent NAD(+) synthetase (260 aa).

Gly31–Ser38 lines the ATP pocket. Position 37 (Asp37) interacts with Mg(2+). Arg112 contributes to the deamido-NAD(+) binding site. An ATP-binding site is contributed by Thr132. Residue Glu137 participates in Mg(2+) binding. Lys161 and Ser183 together coordinate ATP.

The protein belongs to the NAD synthetase family. In terms of assembly, homodimer.

The catalysed reaction is deamido-NAD(+) + NH4(+) + ATP = AMP + diphosphate + NAD(+) + H(+). Its pathway is cofactor biosynthesis; NAD(+) biosynthesis; NAD(+) from deamido-NAD(+) (ammonia route): step 1/1. Catalyzes the ATP-dependent amidation of deamido-NAD to form NAD. Uses ammonia as a nitrogen source. The protein is NH(3)-dependent NAD(+) synthetase of Helicobacter pylori (strain J99 / ATCC 700824) (Campylobacter pylori J99).